The primary structure comprises 142 residues: Large ribosomal subunit protein uL13 (142 aa).

It belongs to the universal ribosomal protein uL13 family. Part of the 50S ribosomal subunit.

This protein is one of the early assembly proteins of the 50S ribosomal subunit, although it is not seen to bind rRNA by itself. It is important during the early stages of 50S assembly. This Xanthomonas campestris pv. campestris (strain ATCC 33913 / DSM 3586 / NCPPB 528 / LMG 568 / P 25) protein is Large ribosomal subunit protein uL13.